Consider the following 295-residue polypeptide: MPYQQITVNVNDAVAERLADALMEHGALSAAIEDACAGTQNEQAIFGEPGMPTEQIWQQSKVIALFGEHDEAAAVIDAAAQECGLKDLAYTGETIENQDWVRLTQSQFDPIRISDRLWITPSWHEAPEGCAVNLRLDPGLAFGTGSHPTTRLCLKWLDTQLKNGESVLDYGCGSGILTIAALKLGAGSAVGVDIDEQAVRSGRDNAEQNNVDAQFFLPDSLPQGQFDVVVANILANPLRMLGEMLAARTKQGGRIVLSGLLDEQAEELGGIYSQWFDLDPAETDEGWARLSGVKR.

S-adenosyl-L-methionine contacts are provided by Thr-150, Gly-171, Asp-193, and Asn-232.

This sequence belongs to the methyltransferase superfamily. PrmA family.

The protein localises to the cytoplasm. The enzyme catalyses L-lysyl-[protein] + 3 S-adenosyl-L-methionine = N(6),N(6),N(6)-trimethyl-L-lysyl-[protein] + 3 S-adenosyl-L-homocysteine + 3 H(+). Functionally, methylates ribosomal protein L11. In Neisseria gonorrhoeae (strain ATCC 700825 / FA 1090), this protein is Ribosomal protein L11 methyltransferase.